The sequence spans 391 residues: Nucleosome assembly protein 1-like 1 (391 aa).

The segment covering 1–10 (MADIDNKEQS) has biased composition (basic and acidic residues). A disordered region spans residues 1 to 32 (MADIDNKEQSELDQDLDDVEEVEEEETGEETK). Ala-2 is modified (N-acetylalanine). Ser-10 is subject to Phosphoserine. The span at 11–28 (ELDQDLDDVEEVEEEETG) shows a compositional bias: acidic residues. Phosphothreonine occurs at positions 62 and 64. Phosphoserine is present on Ser-69. At Lys-116 the chain carries N6-acetyllysine. The NAP1L motif motif lies at 125 to 150 (YEPTEEECEWKPDEEDEISEELKEKA). Acidic residues predominate over residues 132–143 (CEWKPDEEDEIS). The tract at residues 132–163 (CEWKPDEEDEISEELKEKAKVEDEKKDEEKED) is disordered. At Ser-143 the chain carries Phosphoserine. Positions 144–163 (EELKEKAKVEDEKKDEEKED) are enriched in basic and acidic residues. The short motif at 273–279 (IKKKQKH) is the Nuclear localization signal element. The disordered stretch occupies residues 345-391 (EAIEDDDDDYDEEGEEADEEGEEEGDEENDPDYDPKKDQNPAECKQQ). A compositionally biased stretch (acidic residues) spans 346–376 (AIEDDDDDYDEEGEEADEEGEEEGDEENDPD). A 5-glutamyl polyglycine mark is found at Glu-359 and Glu-360. Over residues 377-391 (YDPKKDQNPAECKQQ) the composition is skewed to basic and acidic residues. Cys-388 is subject to Cysteine methyl ester. A lipid anchor (S-farnesyl cysteine) is attached at Cys-388. A propeptide spans 389–391 (KQQ) (removed in mature form).

It belongs to the nucleosome assembly protein (NAP) family. In terms of assembly, homodimer. The dimer binds strongly and sequentially to single and double H2A-H2B heterodimers. Interacts with ERCC6; this interaction increases ERCC6 processivity. Interacts with RAD54. Interacts with SETD1A. In terms of processing, polyglycylated by TTLL10 on glutamate residues, resulting in polyglycine chains on the gamma-carboxyl group. Both polyglutamylation and polyglycylation modifications can coexist on the same protein on adjacent residues, and lowering polyglycylation levels increases polyglutamylation, and reciprocally. Polyglutamylated by TTLL4 on glutamate residues, resulting in polyglutamate chains on the gamma-carboxyl group. Both polyglutamylation and polyglycylation modifications can coexist on the same protein on adjacent residues, and lowering polyglycylation levels increases polyglutamylation, and reciprocally.

The protein resides in the nucleus. Its subcellular location is the melanosome. It is found in the cytoplasm. Functionally, histone chaperone that plays a role in the nuclear import of H2A-H2B and nucleosome assembly. Also participates in several important DNA repair mechanisms: greatly enhances ERCC6-mediated chromatin remodeling which is essential for transcription-coupled nucleotide excision DNA repair. Also stimulates homologous recombination (HR) by RAD51 and RAD54 which is essential in mitotic DNA double strand break (DSB) repair. Plays a key role in the regulation of embryonic neurogenesis. Promotes the proliferation of neural progenitors and inhibits neuronal differentiation during cortical development. Regulates neurogenesis via the modulation of RASSF10; regulates RASSF10 expression by promoting SETD1A-mediated H3K4 methylation at the RASSF10 promoter. This is Nucleosome assembly protein 1-like 1 (NAP1L1) from Bos taurus (Bovine).